The chain runs to 334 residues: GTP 3',8-cyclase (334 aa).

Residues 11-236 (GFNRKIDYLR…ESTESSMGPA (226 aa)) enclose the Radical SAM core domain. Arg-20 provides a ligand contact to GTP. Residues Cys-27 and Cys-31 each contribute to the [4Fe-4S] cluster site. An S-adenosyl-L-methionine-binding site is contributed by Tyr-33. Cys-34 contributes to the [4Fe-4S] cluster binding site. Position 69 (Arg-69) interacts with GTP. Gly-73 contributes to the S-adenosyl-L-methionine binding site. Thr-100 provides a ligand contact to GTP. Ser-124 provides a ligand contact to S-adenosyl-L-methionine. Lys-161 serves as a coordination point for GTP. S-adenosyl-L-methionine is bound at residue Met-195. 2 residues coordinate [4Fe-4S] cluster: Cys-260 and Cys-263. 265-267 (RVR) serves as a coordination point for GTP. [4Fe-4S] cluster is bound at residue Cys-277.

Belongs to the radical SAM superfamily. MoaA family. As to quaternary structure, monomer and homodimer. It depends on [4Fe-4S] cluster as a cofactor.

The enzyme catalyses GTP + AH2 + S-adenosyl-L-methionine = (8S)-3',8-cyclo-7,8-dihydroguanosine 5'-triphosphate + 5'-deoxyadenosine + L-methionine + A + H(+). It participates in cofactor biosynthesis; molybdopterin biosynthesis. In terms of biological role, catalyzes the cyclization of GTP to (8S)-3',8-cyclo-7,8-dihydroguanosine 5'-triphosphate. The sequence is that of GTP 3',8-cyclase from Pseudomonas putida (strain ATCC 47054 / DSM 6125 / CFBP 8728 / NCIMB 11950 / KT2440).